Consider the following 118-residue polypeptide: M-zodatoxin-Lt8p (118 aa).

A signal peptide spans 1–3 (AES). A propeptide spanning residues 4–43 (KPAESEHELAEVEEENELADLEDAVWLEHLADLSDLEEAR) is cleaved from the precursor.

The protein belongs to the cationic peptide 06 (cytoinsectotoxin) family. As to expression, expressed by the venom gland.

The protein resides in the secreted. Functionally, insecticidal, cytolytic and antimicrobial peptide. Forms voltage-dependent, ion-permeable channels in membranes. At high concentration causes cell membrane lysis. This chain is M-zodatoxin-Lt8p (cit 1-15), found in Lachesana tarabaevi (Spider).